We begin with the raw amino-acid sequence, 92 residues long: Small ribosomal subunit protein uS19c (92 aa).

The protein belongs to the universal ribosomal protein uS19 family.

The protein resides in the plastid. Its subcellular location is the chloroplast. In terms of biological role, protein S19 forms a complex with S13 that binds strongly to the 16S ribosomal RNA. The polypeptide is Small ribosomal subunit protein uS19c (Coffea arabica (Arabian coffee)).